A 264-amino-acid polypeptide reads, in one-letter code: Thymidylate synthase (264 aa).

Position 21 (Arg-21) interacts with dUMP. Position 51 (His-51) interacts with (6R)-5,10-methylene-5,6,7,8-tetrahydrofolate. Residue 126–127 (RR) participates in dUMP binding. Catalysis depends on Cys-146, which acts as the Nucleophile. DUMP-binding positions include 166–169 (RSGD), Asn-177, and 207–209 (HLY). Asp-169 is a binding site for (6R)-5,10-methylene-5,6,7,8-tetrahydrofolate. Residue Ala-263 coordinates (6R)-5,10-methylene-5,6,7,8-tetrahydrofolate.

Belongs to the thymidylate synthase family. Bacterial-type ThyA subfamily. As to quaternary structure, homodimer.

The protein resides in the cytoplasm. The catalysed reaction is dUMP + (6R)-5,10-methylene-5,6,7,8-tetrahydrofolate = 7,8-dihydrofolate + dTMP. It participates in pyrimidine metabolism; dTTP biosynthesis. Its function is as follows. Catalyzes the reductive methylation of 2'-deoxyuridine-5'-monophosphate (dUMP) to 2'-deoxythymidine-5'-monophosphate (dTMP) while utilizing 5,10-methylenetetrahydrofolate (mTHF) as the methyl donor and reductant in the reaction, yielding dihydrofolate (DHF) as a by-product. This enzymatic reaction provides an intracellular de novo source of dTMP, an essential precursor for DNA biosynthesis. This chain is Thymidylate synthase, found in Xanthomonas campestris pv. campestris (strain 8004).